Consider the following 523-residue polypeptide: Maturase K (523 aa).

It belongs to the intron maturase 2 family. MatK subfamily.

The protein localises to the plastid. The protein resides in the chloroplast. Its function is as follows. Usually encoded in the trnK tRNA gene intron. Probably assists in splicing its own and other chloroplast group II introns. The protein is Maturase K of Asphodeline lutea (King's spear).